Here is a 325-residue protein sequence, read N- to C-terminus: Tetraacyldisaccharide 4'-kinase (325 aa).

T55–T62 lines the ATP pocket.

It belongs to the LpxK family.

It carries out the reaction a lipid A disaccharide + ATP = a lipid IVA + ADP + H(+). It functions in the pathway glycolipid biosynthesis; lipid IV(A) biosynthesis; lipid IV(A) from (3R)-3-hydroxytetradecanoyl-[acyl-carrier-protein] and UDP-N-acetyl-alpha-D-glucosamine: step 6/6. Functionally, transfers the gamma-phosphate of ATP to the 4'-position of a tetraacyldisaccharide 1-phosphate intermediate (termed DS-1-P) to form tetraacyldisaccharide 1,4'-bis-phosphate (lipid IVA). The sequence is that of Tetraacyldisaccharide 4'-kinase from Salmonella enteritidis PT4 (strain P125109).